The sequence spans 215 residues: Probable nicotinate-nucleotide adenylyltransferase (215 aa).

Belongs to the NadD family.

It carries out the reaction nicotinate beta-D-ribonucleotide + ATP + H(+) = deamido-NAD(+) + diphosphate. It functions in the pathway cofactor biosynthesis; NAD(+) biosynthesis; deamido-NAD(+) from nicotinate D-ribonucleotide: step 1/1. Catalyzes the reversible adenylation of nicotinate mononucleotide (NaMN) to nicotinic acid adenine dinucleotide (NaAD). The sequence is that of Probable nicotinate-nucleotide adenylyltransferase from Shewanella sp. (strain W3-18-1).